The chain runs to 389 residues: Methionyl-tRNA formyltransferase, mitochondrial (389 aa).

Belongs to the Fmt family.

The protein resides in the mitochondrion. The enzyme catalyses L-methionyl-tRNA(fMet) + (6R)-10-formyltetrahydrofolate = N-formyl-L-methionyl-tRNA(fMet) + (6S)-5,6,7,8-tetrahydrofolate + H(+). Functionally, methionyl-tRNA formyltransferase that formylates methionyl-tRNA in mitochondria and is crucial for translation initiation. The polypeptide is Methionyl-tRNA formyltransferase, mitochondrial (MTFMT) (Homo sapiens (Human)).